The primary structure comprises 262 residues: Adenosylcobinamide-GDP ribazoletransferase (262 aa).

Helical transmembrane passes span 4–21, 37–57, 62–82, 112–132, 141–161, 181–201, 202–222, and 236–256; these read AWSG…IPIR, AFPL…FIFS, LSPL…AGGL, VGAF…LFVF, IFLI…LLIY, YDAH…CAIH, FSVW…VFVA, and DALG…IWLL.

Belongs to the CobS family. Mg(2+) serves as cofactor.

It localises to the cell membrane. It carries out the reaction alpha-ribazole + adenosylcob(III)inamide-GDP = adenosylcob(III)alamin + GMP + H(+). It catalyses the reaction alpha-ribazole 5'-phosphate + adenosylcob(III)inamide-GDP = adenosylcob(III)alamin 5'-phosphate + GMP + H(+). Its pathway is cofactor biosynthesis; adenosylcobalamin biosynthesis; adenosylcobalamin from cob(II)yrinate a,c-diamide: step 7/7. Its function is as follows. Joins adenosylcobinamide-GDP and alpha-ribazole to generate adenosylcobalamin (Ado-cobalamin). Also synthesizes adenosylcobalamin 5'-phosphate from adenosylcobinamide-GDP and alpha-ribazole 5'-phosphate. The protein is Adenosylcobinamide-GDP ribazoletransferase of Geobacillus sp. (strain WCH70).